The sequence spans 71 residues: Small ribosomal subunit protein bS18 (71 aa).

This sequence belongs to the bacterial ribosomal protein bS18 family. In terms of assembly, part of the 30S ribosomal subunit. Forms a tight heterodimer with protein bS6.

In terms of biological role, binds as a heterodimer with protein bS6 to the central domain of the 16S rRNA, where it helps stabilize the platform of the 30S subunit. This Thermosynechococcus vestitus (strain NIES-2133 / IAM M-273 / BP-1) protein is Small ribosomal subunit protein bS18.